Consider the following 449-residue polypeptide: Tubulin beta chain (449 aa).

GTP-binding residues include Q11, E71, S140, G144, T145, G146, N206, and N228. E71 provides a ligand contact to Mg(2+).

It belongs to the tubulin family. As to quaternary structure, dimer of alpha and beta chains. A typical microtubule is a hollow water-filled tube with an outer diameter of 25 nm and an inner diameter of 15 nM. Alpha-beta heterodimers associate head-to-tail to form protofilaments running lengthwise along the microtubule wall with the beta-tubulin subunit facing the microtubule plus end conferring a structural polarity. Microtubules usually have 13 protofilaments but different protofilament numbers can be found in some organisms and specialized cells. The cofactor is Mg(2+).

Its subcellular location is the cytoplasm. The protein localises to the cytoskeleton. Functionally, tubulin is the major constituent of microtubules, a cylinder consisting of laterally associated linear protofilaments composed of alpha- and beta-tubulin heterodimers. Microtubules grow by the addition of GTP-tubulin dimers to the microtubule end, where a stabilizing cap forms. Below the cap, tubulin dimers are in GDP-bound state, owing to GTPase activity of alpha-tubulin. This chain is Tubulin beta chain (TUBB), found in Cicer arietinum (Chickpea).